Here is a 342-residue protein sequence, read N- to C-terminus: Delta(6)-protoilludene synthase (342 aa).

Mg(2+) is bound by residues D81, N217, S221, and E225. A DDXXD motif motif is present at residues 81–85 (DEYSD). (2E,6E)-farnesyl diphosphate is bound by residues R306 and Y307.

The protein belongs to the terpene synthase family. Mg(2+) is required as a cofactor.

It catalyses the reaction (2E,6E)-farnesyl diphosphate = Delta(6)-protoilludene + diphosphate. Delta(6)-protoilludene synthase, part of the gene cluster that mediates the biosynthesis of melleolides, a range of antifungal and phytotoxic polyketide derivatives composed of an orsellinic acid (OA) moiety esterified to various sesquiterpene alcohols. The first step in melleolides biosynthesis is performed by the delta(6)-protoilludene synthase PRO1 which catalyzes the cyclization of farnesyl diphosphate to protoilludene. The orsellinic acid synthase armB produces OA by condensing acetyl-CoA with 3 malonyl-CoA units in a three-round chain elongation reaction folowed by a C2-C7 ring closure. ArmB further catalyzes the trans-esterification of OA to the various sesquiterpene alcohols resulting from the hydroxylation of protoilludene. The melleolides cluster also includes 5 cytochrome P450 monooxygenases, 4 NAD(+)-dependent oxidoreductases, one flavin-dependent oxidoreductase, and one O-methyltransferase. The cytochrome P450 monooxygenases may be involved in protoilludene hydroxylation to elaborate melleolides with multiple alcohol groups, such as melleolide D, which carries alcohol functionalities at C-4, C-5, C-10, and C-13. The role of the NAD(+)-dependent enzymes remains unknown. Numerous melleolides, including arnamial, show 5'-O-methylation of the aromatic moiety which may be catalyzed by the methyltransferase encoded in the cluster. The flavin-dependent oxidoreductase might represent the dehydrogenase yielding the aldehyde in position 1 of arnamial and other melleolides. Finally, several halogenases, localized outside of the cluster, are able to catalyze the transfer of a single chlorine atom to the melleolide backbone, resulting in a 6'-chloromelleolide product. This is Delta(6)-protoilludene synthase from Armillaria ostoyae (Armillaria root rot fungus).